The following is a 317-amino-acid chain: 4-diphosphocytidyl-2-C-methyl-D-erythritol kinase (317 aa).

The active site involves K11. 99 to 109 (PVAAGLAGGST) contacts ATP. D141 is an active-site residue.

It belongs to the GHMP kinase family. IspE subfamily.

The enzyme catalyses 4-CDP-2-C-methyl-D-erythritol + ATP = 4-CDP-2-C-methyl-D-erythritol 2-phosphate + ADP + H(+). It participates in isoprenoid biosynthesis; isopentenyl diphosphate biosynthesis via DXP pathway; isopentenyl diphosphate from 1-deoxy-D-xylulose 5-phosphate: step 3/6. Catalyzes the phosphorylation of the position 2 hydroxy group of 4-diphosphocytidyl-2C-methyl-D-erythritol. The protein is 4-diphosphocytidyl-2-C-methyl-D-erythritol kinase of Nostoc punctiforme (strain ATCC 29133 / PCC 73102).